We begin with the raw amino-acid sequence, 756 residues long: Polyribonucleotide nucleotidyltransferase (756 aa).

Asp-492 and Asp-498 together coordinate Mg(2+). The KH domain occupies 559-618 (PQHAEVFVNPDVIRIIIGPGGKNIKAITAATGASIDIEDSGKVSIFAPTYEAMEMAREMV). Residues 628–702 (GKNYVGKVRK…SRKAVLLEEQ (75 aa)) enclose the S1 motif domain. The disordered stretch occupies residues 703 to 756 (GVEWNPEDTARPSGPPRDRGDRGDRGGRGDRGGDRRGGDRGGRGGDRGRGGDRR). The segment covering 718 to 756 (PRDRGDRGDRGGRGDRGGDRRGGDRGGRGGDRGRGGDRR) has biased composition (basic and acidic residues).

This sequence belongs to the polyribonucleotide nucleotidyltransferase family. The cofactor is Mg(2+).

Its subcellular location is the cytoplasm. It carries out the reaction RNA(n+1) + phosphate = RNA(n) + a ribonucleoside 5'-diphosphate. In terms of biological role, involved in mRNA degradation. Catalyzes the phosphorolysis of single-stranded polyribonucleotides processively in the 3'- to 5'-direction. This Nitratidesulfovibrio vulgaris (strain DSM 19637 / Miyazaki F) (Desulfovibrio vulgaris) protein is Polyribonucleotide nucleotidyltransferase.